The sequence spans 256 residues: Small ribosomal subunit protein eS1 (256 aa).

A2 bears the N-acetylalanine; partial mark.

It belongs to the eukaryotic ribosomal protein eS1 family. In terms of assembly, component of the small ribosomal subunit. Mature ribosomes consist of a small (40S) and a large (60S) subunit. The 40S subunit contains about 33 different proteins and 1 molecule of RNA (18S). The 60S subunit contains about 49 different proteins and 3 molecules of RNA (25S, 5.8S and 5S).

It localises to the cytoplasm. The sequence is that of Small ribosomal subunit protein eS1 from Eremothecium gossypii (strain ATCC 10895 / CBS 109.51 / FGSC 9923 / NRRL Y-1056) (Yeast).